Here is a 459-residue protein sequence, read N- to C-terminus: Vasoactive intestinal polypeptide receptor 1 (459 aa).

The N-terminal stretch at 1 to 30 is a signal peptide; it reads MRPPSLPPARWLCVLAGALACALGPAGSRA. The Extracellular segment spans residues 31-142; sequence ASPHQECEYL…EQQQTEFYDA (112 aa). Intrachain disulfides connect Cys37-Cys209, Cys50-Cys72, Cys63-Cys105, Cys86-Cys122, and Cys216-Cys286. Asn58, Asn69, Asn100, and Asn104 each carry an N-linked (GlcNAc...) asparagine glycan. A helical membrane pass occupies residues 143–167; that stretch reads VKTGYTIGYSLSLASLLVAMAILSL. At 168-175 the chain is on the cytoplasmic side; that stretch reads FRKLHCTR. The helical transmembrane segment at 176 to 197 threads the bilayer; that stretch reads NYIHMHLFMSFILRATAVFIKD. Residues 198–217 are Extracellular-facing; it reads MALFNNGETDHCSEASVSCK. A helical membrane pass occupies residues 218–242; the sequence is AAVVFFQYCVMANFFWLLVEGLYLH. Topologically, residues 243 to 255 are cytoplasmic; sequence TLLAVSFFSERKY. The chain crosses the membrane as a helical span at residues 256-277; the sequence is FWGYILIGWGVPSVFIMIWTIV. Residues 278–293 are Extracellular-facing; that stretch reads RIHFEDFGCWDTIINS. N-linked (GlcNAc...) asparagine glycosylation is present at Asn292. A helical membrane pass occupies residues 294–318; that stretch reads SLWWIIKGPILISILVNFILFICII. The Cytoplasmic portion of the chain corresponds to 319–340; the sequence is RILVQKLRPPDIGKNDSSPYSR. The helical transmembrane segment at 341 to 361 threads the bilayer; it reads LAKSTLLLIPLFGVHYVMFAF. Residues 362–369 are Extracellular-facing; sequence FPDNFKAQ. A helical membrane pass occupies residues 370-393; it reads VKMVFELVVGSFQGFVVAILYCFL. The Cytoplasmic portion of the chain corresponds to 394–459; the sequence is NGEVQAELRR…SSFQAEVSLV (66 aa).

It belongs to the G-protein coupled receptor 2 family. In terms of assembly, interacts with ADCYAP1/PACAP; activated by both PACAP27 and PACAP38 neuropeptides. Interacts with VIP; the interaction results in VIPR1 activation.

It localises to the cell membrane. Functionally, g protein-coupled receptor activated by the neuropeptides vasoactive intestinal peptide (VIP) and pituitary adenylate cyclase-activating polypeptide (ADCYAP1/PACAP). Binds VIP and both PACAP27 and PACAP38 bioactive peptides with the following order of ligand affinity VIP = PACAP27 &gt; PACAP38. Ligand binding causes a conformation change that triggers signaling via guanine nucleotide-binding proteins (G proteins) and modulates the activity of downstream effectors. Activates cAMP-dependent pathway. The sequence is that of Vasoactive intestinal polypeptide receptor 1 from Mus musculus (Mouse).